We begin with the raw amino-acid sequence, 367 residues long: Peptide chain release factor 2 (367 aa).

Gln-254 carries the N5-methylglutamine modification.

The protein belongs to the prokaryotic/mitochondrial release factor family. Methylated by PrmC. Methylation increases the termination efficiency of RF2.

It is found in the cytoplasm. In terms of biological role, peptide chain release factor 2 directs the termination of translation in response to the peptide chain termination codons UGA and UAA. The chain is Peptide chain release factor 2 from Leptospira borgpetersenii serovar Hardjo-bovis (strain JB197).